Consider the following 629-residue polypeptide: tRNA uridine 5-carboxymethylaminomethyl modification enzyme MnmG (629 aa).

Residues 15–20 (GAGHAG), valine 127, and serine 182 contribute to the FAD site. Positions 203 to 226 (TPPRVKSSTIDYSKTEEQPGDDHP) are disordered. Basic and acidic residues predominate over residues 215–226 (SKTEEQPGDDHP). 274–288 (GARYCPSIEDKIVRF) is a binding site for NAD(+). Glutamine 371 provides a ligand contact to FAD.

It belongs to the MnmG family. Homodimer. Heterotetramer of two MnmE and two MnmG subunits. FAD serves as cofactor.

It localises to the cytoplasm. NAD-binding protein involved in the addition of a carboxymethylaminomethyl (cmnm) group at the wobble position (U34) of certain tRNAs, forming tRNA-cmnm(5)s(2)U34. The sequence is that of tRNA uridine 5-carboxymethylaminomethyl modification enzyme MnmG from Listeria innocua serovar 6a (strain ATCC BAA-680 / CLIP 11262).